A 301-amino-acid chain; its full sequence is Probable 2-(5''-triphosphoribosyl)-3'-dephosphocoenzyme-A synthase (301 aa).

It belongs to the CitG/MdcB family.

The enzyme catalyses 3'-dephospho-CoA + ATP = 2'-(5''-triphospho-alpha-D-ribosyl)-3'-dephospho-CoA + adenine. This Pectobacterium carotovorum subsp. carotovorum (strain PC1) protein is Probable 2-(5''-triphosphoribosyl)-3'-dephosphocoenzyme-A synthase.